Here is a 442-residue protein sequence, read N- to C-terminus: 3-phosphoshikimate 1-carboxyvinyltransferase (442 aa).

The 3-phosphoshikimate site is built by lysine 25, serine 26, and arginine 30. Residue lysine 25 coordinates phosphoenolpyruvate. Residues glycine 96 and arginine 124 each coordinate phosphoenolpyruvate. The 3-phosphoshikimate site is built by serine 171, serine 172, glutamine 173, serine 203, aspartate 325, and lysine 352. Glutamine 173 provides a ligand contact to phosphoenolpyruvate. Catalysis depends on aspartate 325, which acts as the Proton acceptor. Phosphoenolpyruvate-binding residues include arginine 356, arginine 400, and lysine 425.

The protein belongs to the EPSP synthase family. As to quaternary structure, monomer.

The protein resides in the cytoplasm. It catalyses the reaction 3-phosphoshikimate + phosphoenolpyruvate = 5-O-(1-carboxyvinyl)-3-phosphoshikimate + phosphate. The protein operates within metabolic intermediate biosynthesis; chorismate biosynthesis; chorismate from D-erythrose 4-phosphate and phosphoenolpyruvate: step 6/7. Catalyzes the transfer of the enolpyruvyl moiety of phosphoenolpyruvate (PEP) to the 5-hydroxyl of shikimate-3-phosphate (S3P) to produce enolpyruvyl shikimate-3-phosphate and inorganic phosphate. The chain is 3-phosphoshikimate 1-carboxyvinyltransferase from Bordetella bronchiseptica (strain ATCC BAA-588 / NCTC 13252 / RB50) (Alcaligenes bronchisepticus).